Reading from the N-terminus, the 394-residue chain is S-adenosylmethionine synthase 2 (394 aa).

Residue glutamate 11 participates in Mg(2+) binding. Position 17 (histidine 17) interacts with ATP. Residue glutamate 45 participates in K(+) binding. Positions 58 and 101 each coordinate L-methionine. Residues 169–171 (DGK), 237–240 (SGRF), aspartate 248, 254–255 (RK), alanine 271, lysine 275, and lysine 279 each bind ATP. Residue aspartate 248 coordinates L-methionine. Lysine 279 serves as a coordination point for L-methionine.

This sequence belongs to the AdoMet synthase family. As to quaternary structure, homotetramer. The cofactor is Mn(2+). Mg(2+) serves as cofactor. Requires Co(2+) as cofactor. It depends on K(+) as a cofactor.

Its subcellular location is the cytoplasm. It catalyses the reaction L-methionine + ATP + H2O = S-adenosyl-L-methionine + phosphate + diphosphate. It functions in the pathway amino-acid biosynthesis; S-adenosyl-L-methionine biosynthesis; S-adenosyl-L-methionine from L-methionine: step 1/1. Functionally, catalyzes the formation of S-adenosylmethionine from methionine and ATP. The reaction comprises two steps that are both catalyzed by the same enzyme: formation of S-adenosylmethionine (AdoMet) and triphosphate, and subsequent hydrolysis of the triphosphate. In Oryza sativa subsp. japonica (Rice), this protein is S-adenosylmethionine synthase 2 (SAM2).